The following is a 192-amino-acid chain: Sarcoplasmic calcium-binding protein, beta chain (192 aa).

Ala-1 carries the post-translational modification N-acetylalanine. EF-hand domains follow at residues 4–39 (WDNR…VTLI), 56–91 (IMAN…NCKG), 100–135 (AFKV…RSAF), and 136–171 (ADVK…YAQF). Residues Asp-17, Asp-19, Asp-21, Asp-28, Asp-69, Asn-71, Asp-73, Glu-75, Glu-80, Asp-113, Asp-115, Asp-117, Met-119, and Glu-124 each contribute to the Ca(2+) site.

As to quaternary structure, SCPs from crayfish, lobster, and shrimp are polymorphic dimers; three isotypes (alpha-alpha, alpha-beta, and beta-beta) have been identified.

Its function is as follows. Like parvalbumins, SCPs seem to be more abundant in fast contracting muscles, but no functional relationship can be established from this distribution. In Penaeus sp. (Penoeid shrimp), this protein is Sarcoplasmic calcium-binding protein, beta chain.